Reading from the N-terminus, the 227-residue chain is Flagellar L-ring protein (227 aa).

An N-terminal signal peptide occupies residues 1–15 (MRTWAVLPILLMLVG). A lipid anchor (N-palmitoyl cysteine) is attached at C16. C16 carries S-diacylglycerol cysteine lipidation.

It belongs to the FlgH family. The basal body constitutes a major portion of the flagellar organelle and consists of four rings (L,P,S, and M) mounted on a central rod.

Its subcellular location is the cell outer membrane. It is found in the bacterial flagellum basal body. Its function is as follows. Assembles around the rod to form the L-ring and probably protects the motor/basal body from shearing forces during rotation. The protein is Flagellar L-ring protein of Syntrophotalea carbinolica (strain DSM 2380 / NBRC 103641 / GraBd1) (Pelobacter carbinolicus).